The sequence spans 232 residues: LOB domain-containing protein 11 (232 aa).

The interval 1 to 50 (MLKMEINGGVATPTASAVAKVTETTTPVNSPSPTSSPPPPPSPQQPPQPP) is disordered. A compositionally biased stretch (pro residues) spans 34–50 (TSSPPPPPSPQQPPQPP). The LOB domain maps to 54-155 (SPCAACKILR…AQLAKTQVEL (102 aa)). The tract at residues 181–218 (EQGQQKMSFESSFESGDEFISSPDEESNDLGFLEDNNN) is disordered. Residues 188–202 (SFESSFESGDEFISS) are compositionally biased toward low complexity.

This sequence belongs to the LOB domain-containing protein family. Expressed in young shoots, stems, leaves and flowers.

In Arabidopsis thaliana (Mouse-ear cress), this protein is LOB domain-containing protein 11 (LBD11).